The following is a 504-amino-acid chain: Hexokinase-10 (504 aa).

The chain crosses the membrane as a helical span at residues 7 to 29; it reads GWVRVAAVGWAVAACAVAAGMVA. A Hexokinase domain is found at 39–493; the sequence is NRAVAVVRDL…SGTGAALLAA (455 aa). The segment at 94-226 is hexokinase small subdomain; that stretch reads DGSEEGISYA…GLNMKVNVLV (133 aa). ADP contacts are provided by Gly-108 and Thr-109. Residues Thr-192, Lys-193, Asn-227, Asn-254, Glu-282, and Glu-313 each coordinate D-glucose. Positions 227-482 are hexokinase large subdomain; it reads NNTVGTLALG…ATVSLRVMEE (256 aa). An ADP-binding site is contributed by Gly-447.

It belongs to the hexokinase family. As to expression, expressed specifically in stamen.

The protein resides in the plastid. The protein localises to the chloroplast outer membrane. The enzyme catalyses a D-hexose + ATP = a D-hexose 6-phosphate + ADP + H(+). It catalyses the reaction D-fructose + ATP = D-fructose 6-phosphate + ADP + H(+). It carries out the reaction D-glucose + ATP = D-glucose 6-phosphate + ADP + H(+). The protein operates within carbohydrate metabolism; hexose metabolism. Its pathway is carbohydrate degradation; glycolysis; D-glyceraldehyde 3-phosphate and glycerone phosphate from D-glucose: step 1/4. Its function is as follows. Fructose and glucose phosphorylating enzyme. The chain is Hexokinase-10 (HXK10) from Oryza sativa subsp. japonica (Rice).